Here is a 181-residue protein sequence, read N- to C-terminus: Adenine phosphoribosyltransferase (181 aa).

The protein belongs to the purine/pyrimidine phosphoribosyltransferase family. As to quaternary structure, homodimer.

It localises to the cytoplasm. It carries out the reaction AMP + diphosphate = 5-phospho-alpha-D-ribose 1-diphosphate + adenine. It participates in purine metabolism; AMP biosynthesis via salvage pathway; AMP from adenine: step 1/1. In terms of biological role, catalyzes a salvage reaction resulting in the formation of AMP, that is energically less costly than de novo synthesis. This chain is Adenine phosphoribosyltransferase, found in Aliivibrio salmonicida (strain LFI1238) (Vibrio salmonicida (strain LFI1238)).